Here is a 209-residue protein sequence, read N- to C-terminus: Transcription antitermination protein NusB (209 aa).

It belongs to the NusB family.

Involved in transcription antitermination. Required for transcription of ribosomal RNA (rRNA) genes. Binds specifically to the boxA antiterminator sequence of the ribosomal RNA (rrn) operons. The chain is Transcription antitermination protein NusB from Crocosphaera subtropica (strain ATCC 51142 / BH68) (Cyanothece sp. (strain ATCC 51142)).